Consider the following 143-residue polypeptide: Small ribosomal subunit protein uS11c (143 aa).

Belongs to the universal ribosomal protein uS11 family. Part of the 30S ribosomal subunit.

It is found in the plastid. The protein resides in the chloroplast. The polypeptide is Small ribosomal subunit protein uS11c (Saccharum officinarum (Sugarcane)).